Reading from the N-terminus, the 374-residue chain is Cell division protein DivIB (374 aa).

The segment at 1–90 (MWKISNENDI…EEEHFADRLP (90 aa)) is disordered. The Cytoplasmic portion of the chain corresponds to 1 to 103 (MWKISNENDI…KTRNKRLYRR (103 aa)). A compositionally biased stretch (basic and acidic residues) spans 39–53 (YLKKQAEEAASKGEN). Residues 56–75 (AEVTITLQEQSQEEPQQHLP) are compositionally biased toward polar residues. The chain crosses the membrane as a helical span at residues 104–124 (LAFILTCLGTAILVALYFVSP). Topologically, residues 125 to 374 (LSRLSEVTVS…GENQEVQQAE (250 aa)) are extracellular. In terms of domain architecture, POTRA spans 126 to 197 (SRLSEVTVSG…NSFKIDIQEY (72 aa)). The disordered stretch occupies residues 325–374 (KESEETGSEVSEDSAVENQEVVDPNAGVATDEANNGTPTNGENQEVQQAE). Residues 326-339 (ESEETGSEVSEDSA) are compositionally biased toward acidic residues. Over residues 356 to 374 (EANNGTPTNGENQEVQQAE) the composition is skewed to polar residues.

This sequence belongs to the FtsQ/DivIB family. DivIB subfamily.

The protein resides in the cell membrane. Functionally, cell division protein that may be involved in stabilizing or promoting the assembly of the division complex. The protein is Cell division protein DivIB of Enterococcus faecalis (strain ATCC 700802 / V583).